Consider the following 423-residue polypeptide: UDP-N-acetylglucosamine 1-carboxyvinyltransferase (423 aa).

Residue 22 to 23 (KN) participates in phosphoenolpyruvate binding. Arg93 lines the UDP-N-acetyl-alpha-D-glucosamine pocket. Cys117 serves as the catalytic Proton donor. Position 117 is a 2-(S-cysteinyl)pyruvic acid O-phosphothioketal (Cys117). Residues 122–126 (RPVDL), Asp308, and Ile330 each bind UDP-N-acetyl-alpha-D-glucosamine.

Belongs to the EPSP synthase family. MurA subfamily.

The protein resides in the cytoplasm. It carries out the reaction phosphoenolpyruvate + UDP-N-acetyl-alpha-D-glucosamine = UDP-N-acetyl-3-O-(1-carboxyvinyl)-alpha-D-glucosamine + phosphate. It participates in cell wall biogenesis; peptidoglycan biosynthesis. Its function is as follows. Cell wall formation. Adds enolpyruvyl to UDP-N-acetylglucosamine. This is UDP-N-acetylglucosamine 1-carboxyvinyltransferase from Maricaulis maris (strain MCS10) (Caulobacter maris).